The primary structure comprises 130 residues: Small ribosomal subunit protein uS8 (130 aa).

Belongs to the universal ribosomal protein uS8 family. In terms of assembly, part of the 30S ribosomal subunit. Contacts proteins S5 and S12.

Functionally, one of the primary rRNA binding proteins, it binds directly to 16S rRNA central domain where it helps coordinate assembly of the platform of the 30S subunit. This is Small ribosomal subunit protein uS8 from Pseudoalteromonas atlantica (strain T6c / ATCC BAA-1087).